A 344-amino-acid polypeptide reads, in one-letter code: Replication-associated protein G2P (344 aa).

It belongs to the inovirus G2P protein family.

It carries out the reaction ATP + (deoxyribonucleotide)n-3'-hydroxyl + 5'-phospho-(deoxyribonucleotide)m = (deoxyribonucleotide)n+m + AMP + diphosphate.. In terms of biological role, isoform G2P plays an essential role in viral DNA replication. Binds the origin of replication and cleaves the dsDNA replicative form I (RFI) and becomes covalently bound to it via phosphotyrosine bond, generating the dsDNA replicative form II (RFII). In turn, viral DNA replication initiates at the 3'-OH of the cleavage site. After one round of rolling circle synthesis, protein G2P is linked to the newly synthesized ssDNA and joins the ends of the displaced strand to generate a circular single-stranded molecule ready to be packed into a virion. Functionally, isoform G10P protein binds to double-stranded DNA and prevents hydrolysis by nucleases. Additionally, G10P is an inhibitor of DNA replication and may have a role in the transition from semiconservative replicative form DNA replication to single-stranded DNA synthesis in the life cycle. The chain is Replication-associated protein G2P (II) from Enterobacteria phage I2-2 (Bacteriophage I2-2).